A 154-amino-acid chain; its full sequence is uncharacterized protein (154 aa).

At Ser-47 the chain carries Phosphoserine.

It to yeast YPL229w.

This is an uncharacterized protein from Saccharomyces cerevisiae (strain ATCC 204508 / S288c) (Baker's yeast).